Consider the following 290-residue polypeptide: MFKGAGVAIVTPFKEGKIDFAAFEKLIDFHLENNTQALIVLGTTGEASTQTMEEREALIRLAVQRVEGRIPVIVGTGSNCTDTALQYTRQAEDLGADGILVVTPYYNKCTQKGLIEHFTQIANATKLPVILYNVPSRTGVNILPETVATMSKVENVIGIKEAGGNTAQVLEIKRLVPEDFKIYSGNDDQIIPIYACGGHGVISVASNVIPKEIQEMCAAFMEGNVEKALEIQLLYKKFIDLLFCEVNPIPVKAAVSALGYIENELRLPLTPMEEVNRKKLMDEMKKQNII.

Position 44 (T44) interacts with pyruvate. The active-site Proton donor/acceptor is the Y132. Catalysis depends on K160, which acts as the Schiff-base intermediate with substrate. I202 provides a ligand contact to pyruvate.

Belongs to the DapA family. In terms of assembly, homotetramer; dimer of dimers.

It is found in the cytoplasm. It catalyses the reaction L-aspartate 4-semialdehyde + pyruvate = (2S,4S)-4-hydroxy-2,3,4,5-tetrahydrodipicolinate + H2O + H(+). It functions in the pathway amino-acid biosynthesis; L-lysine biosynthesis via DAP pathway; (S)-tetrahydrodipicolinate from L-aspartate: step 3/4. Catalyzes the condensation of (S)-aspartate-beta-semialdehyde [(S)-ASA] and pyruvate to 4-hydroxy-tetrahydrodipicolinate (HTPA). This Alkaliphilus oremlandii (strain OhILAs) (Clostridium oremlandii (strain OhILAs)) protein is 4-hydroxy-tetrahydrodipicolinate synthase.